The following is a 276-amino-acid chain: Melibiose/raffinose/stachyose import permease protein MelC (276 aa).

The next 6 helical transmembrane spans lie at 11 to 31, 74 to 94, 104 to 124, 139 to 159, 186 to 206, and 240 to 260; these read IITL…YILL, IITG…AYPL, AVFA…MVPL, IAIF…YSGF, IVFP…CVFI, and LHLV…LFLA. The ABC transmembrane type-1 domain maps to 69-261; that stretch reads FINTMIITGF…LPMVVLFLAL (193 aa).

Belongs to the binding-protein-dependent transport system permease family. The complex is composed of two ATP-binding proteins (MsmX), two transmembrane proteins (MelC and MelD) and a solute-binding protein (MelE).

Its subcellular location is the cell membrane. Part of the ABC transporter complex MelEDC-MsmX involved in melibiose, raffinose and stachyose import. Probably responsible for the translocation of the substrate across the membrane. This Bacillus subtilis (strain 168) protein is Melibiose/raffinose/stachyose import permease protein MelC.